The chain runs to 491 residues: Monothiol glutaredoxin-S11 (491 aa).

Glutaredoxin domains are found at residues 151 to 253, 287 to 389, and 394 to 491; these read NKRL…NIPL, KERL…GIVA, and EDRL…TLSE. Residue Lys411 participates in glutathione binding. Cys419 is a binding site for [2Fe-2S] cluster. Residues Arg448, Phe460, and 473-474 contribute to the glutathione site; that span reads CD.

The protein belongs to the glutaredoxin family. CGFS subfamily.

It localises to the cytoplasm. Its function is as follows. May only reduce GSH-thiol disulfides, but not protein disulfides. This Oryza sativa subsp. japonica (Rice) protein is Monothiol glutaredoxin-S11 (GRXS11).